Reading from the N-terminus, the 307-residue chain is Acetaldehyde dehydrogenase 2 (307 aa).

NAD(+) is bound at residue 13–16 (SGNI). Cys132 serves as the catalytic Acyl-thioester intermediate. NAD(+) is bound by residues 163-171 (SIGPGTRAN) and Asn274.

It belongs to the acetaldehyde dehydrogenase family.

It carries out the reaction acetaldehyde + NAD(+) + CoA = acetyl-CoA + NADH + H(+). This Methylibium petroleiphilum (strain ATCC BAA-1232 / LMG 22953 / PM1) protein is Acetaldehyde dehydrogenase 2.